We begin with the raw amino-acid sequence, 530 residues long: Ubiquitin carboxyl-terminal hydrolase 17-like protein 13 (530 aa).

One can recognise a USP domain in the interval 80-375; it reads AGLQNMGNTC…QAYVLFYIQK (296 aa). Residue Cys89 is the Nucleophile of the active site. The active-site Proton acceptor is His334. Composition is skewed to basic and acidic residues over residues 382-392 and 398-412; these read SESVSRGREPR and DTDRRATQGELKRDH. 2 disordered regions span residues 382–412 and 477–530; these read SESVSRGREPRALGAEDTDRRATQGELKRDH and NHHP…LVCQ. The span at 493-505 shows a compositional bias: polar residues; that stretch reads TPTHQESMNTGTL. The segment covering 510–524 has biased composition (basic residues); that stretch reads GRARRSKGKNKHSKR.

This sequence belongs to the peptidase C19 family. USP17 subfamily.

The protein resides in the nucleus. It localises to the endoplasmic reticulum. It catalyses the reaction Thiol-dependent hydrolysis of ester, thioester, amide, peptide and isopeptide bonds formed by the C-terminal Gly of ubiquitin (a 76-residue protein attached to proteins as an intracellular targeting signal).. In terms of biological role, deubiquitinating enzyme that removes conjugated ubiquitin from specific proteins to regulate different cellular processes that may include cell proliferation, progression through the cell cycle, apoptosis, cell migration, and the cellular response to viral infection. The chain is Ubiquitin carboxyl-terminal hydrolase 17-like protein 13 (USP17L13) from Homo sapiens (Human).